Consider the following 334-residue polypeptide: Fructose-1,6-bisphosphatase class 1 (334 aa).

Glu90, Asp113, Leu115, and Asp116 together coordinate Mg(2+). Residues 116–119 (DGSS), Asn209, Tyr242, and Lys272 each bind substrate. A Mg(2+)-binding site is contributed by Glu278.

This sequence belongs to the FBPase class 1 family. Homotetramer. Mg(2+) is required as a cofactor.

The protein localises to the cytoplasm. It carries out the reaction beta-D-fructose 1,6-bisphosphate + H2O = beta-D-fructose 6-phosphate + phosphate. Its pathway is carbohydrate biosynthesis; gluconeogenesis. The chain is Fructose-1,6-bisphosphatase class 1 from Actinobacillus succinogenes (strain ATCC 55618 / DSM 22257 / CCUG 43843 / 130Z).